A 141-amino-acid chain; its full sequence is Large ribosomal subunit protein uL16 (141 aa).

The segment at 1–21 is disordered; the sequence is MLMPKRVKYRKQQRGHNRGMA.

This sequence belongs to the universal ribosomal protein uL16 family. As to quaternary structure, part of the 50S ribosomal subunit.

Its function is as follows. Binds 23S rRNA and is also seen to make contacts with the A and possibly P site tRNAs. This Roseiflexus castenholzii (strain DSM 13941 / HLO8) protein is Large ribosomal subunit protein uL16.